Reading from the N-terminus, the 2115-residue chain is Non-reducing polyketide synthase PFUR17_0229 (2115 aa).

Residues V8–H246 form an N-terminal acylcarrier protein transacylase (SAT) domain (SAT) region. In terms of domain architecture, Ketosynthase family 3 (KS3) spans S367 to D796. Residues C539, H674, and H713 each act as for beta-ketoacyl synthase activity in the active site. The tract at residues I895 to A1218 is malonyl-CoA:ACP transacylase (MAT) domain. Residues T1279 to S1592 form a product template (PT) domain region. An N-terminal hotdog fold region spans residues L1282–Q1413. Residues L1282–Q1588 form the PKS/mFAS DH domain. H1315 serves as the catalytic Proton acceptor; for dehydratase activity. Positions V1441 to Q1588 are C-terminal hotdog fold. The active-site Proton donor; for dehydratase activity is the D1501. Positions G1594–S1613 are disordered. One can recognise a Carrier 1 domain in the interval K1626–V1703. S1663 is subject to O-(pantetheine 4'-phosphoryl)serine. Residues F1710–P1742 form a disordered region. A compositionally biased stretch (low complexity) spans S1718–G1733. One can recognise a Carrier 2 domain in the interval P1742–S1819. S1779 bears the O-(pantetheine 4'-phosphoryl)serine mark. Positions L1861 to M2097 are thioesterase (TE) domain.

Requires pantetheine 4'-phosphate as cofactor.

It catalyses the reaction 6 malonyl-CoA + 2 acetyl-CoA + 5 H(+) = o-orsellinate depside + 6 CO2 + 8 CoA + H2O. Its function is as follows. Non-reducing polyketide synthase; part of a gene cluster that mediates the biosynthesis of a yet unidentified depside/depsidone compound. The first step in the pathway is performed by the PKS PFUR17_0229 that condenses 2 acetyl-CoA starter units with 6 malonyl-CoA units to produce lecanoric acid (LA), also known as orsellinate depside. The biosynthesis occurs via the formation of 2 orsellinate intermediates fused together by the C-terminal thioesterase (TE) domain that finally releases lecanoric acid. In addition to the PKS gene, the PFUR17 gene cluster contains closely linked genes encoding a cytochrome P-450 and a laccase (phenol oxidase), directly upstream and downstream respectively, so it is likely that lecanoric acid is an intermediate in a longer biosynthetic pathway. This is Non-reducing polyketide synthase PFUR17_0229 from Pseudevernia furfuracea (Tree moss).